Consider the following 338-residue polypeptide: Homoserine kinase (338 aa).

It belongs to the GHMP kinase family. Homoserine kinase subfamily.

It catalyses the reaction L-homoserine + ATP = O-phospho-L-homoserine + ADP + H(+). It participates in amino-acid biosynthesis; L-threonine biosynthesis; L-threonine from L-aspartate: step 4/5. Its function is as follows. Commits homoserine to the threonine biosynthesis pathway by catalyzing its O-phosphorylation. The polypeptide is Homoserine kinase (Schizosaccharomyces pombe (strain 972 / ATCC 24843) (Fission yeast)).